The primary structure comprises 461 residues: Cysteine--tRNA ligase (461 aa).

Position 28 (C28) interacts with Zn(2+). The 'HIGH' region signature appears at 30 to 40; sequence ITVYDLCHIGH. Zn(2+) is bound by residues C209, H234, and E238. The 'KMSKS' region signature appears at 266-270; it reads KMSKS. An ATP-binding site is contributed by K269.

The protein belongs to the class-I aminoacyl-tRNA synthetase family. In terms of assembly, monomer. The cofactor is Zn(2+).

The protein resides in the cytoplasm. The enzyme catalyses tRNA(Cys) + L-cysteine + ATP = L-cysteinyl-tRNA(Cys) + AMP + diphosphate. This Pectobacterium carotovorum subsp. carotovorum (strain PC1) protein is Cysteine--tRNA ligase.